Reading from the N-terminus, the 83-residue chain is Keratin-associated protein 6-1 (83 aa).

The stretch at 9–15 (YGGLGCG) is one RPT 1-1 repeat. One copy of the RPT 1-2 repeat lies at 19–25 (YGGLGCG). Residues 44-55 (GYGYGSRSLCGS) form an RPT 2-1 repeat. The stretch at 56–67 (GYGYGSRSLCGS) is one RPT 2-2 repeat.

This sequence belongs to the KRTAP type 6 family. Interacts with wool keratins.

Its function is as follows. In the wool cortex, wool keratin intermediate filaments are embedded in an interfilamentous matrix, consisting of hair keratin-associated proteins (KRTAP), which are essential for the formation of a rigid and resistant wool shaft through their extensive disulfide bond cross-linking with abundant cysteine residues of wool keratins. The matrix proteins include the high-sulfur and high-glycine-tyrosine keratins. This chain is Keratin-associated protein 6-1 (KRTAP6-1), found in Ovis aries (Sheep).